The primary structure comprises 351 residues: tRNA pseudouridine synthase D (351 aa).

The active-site Nucleophile is Asp-96. A TRUD domain is found at 174 to 304 (GAPNYFGPQR…MKPERRPLVA (131 aa)). The tract at residues 244–268 (VLPGEPEPSGAGPTGPLWGDGGTLA) is disordered.

Belongs to the pseudouridine synthase TruD family.

The enzyme catalyses uridine(13) in tRNA = pseudouridine(13) in tRNA. Functionally, responsible for synthesis of pseudouridine from uracil-13 in transfer RNAs. In Marinobacter nauticus (strain ATCC 700491 / DSM 11845 / VT8) (Marinobacter aquaeolei), this protein is tRNA pseudouridine synthase D.